The sequence spans 58 residues: Small ribosomal subunit protein bS21 (58 aa).

Basic and acidic residues predominate over residues 32–42 (ARRREHYEKPS). The tract at residues 32 to 58 (ARRREHYEKPSVRRKKKSEAARKRRWH) is disordered. Residues 43 to 58 (VRRKKKSEAARKRRWH) show a composition bias toward basic residues.

Belongs to the bacterial ribosomal protein bS21 family.

This chain is Small ribosomal subunit protein bS21, found in Moorella thermoacetica (strain ATCC 39073 / JCM 9320).